The following is a 149-amino-acid chain: Calmodulin (149 aa).

A2 carries the N-acetylalanine modification. EF-hand domains are found at residues 8-43 (DQIS…LGQN), 44-79 (PTEA…KMKD), 81-116 (DSEE…LGEK), and 117-149 (LTDE…MMAK). The Ca(2+) site is built by D21, D23, D25, C27, E32, D57, D59, N61, T63, E68, D94, D96, N98, and E105. At K116 the chain carries N6,N6,N6-trimethyllysine. 5 residues coordinate Ca(2+): D130, D132, D134, Q136, and E141.

This sequence belongs to the calmodulin family.

Calmodulin mediates the control of a large number of enzymes, ion channels and other proteins by Ca(2+). Among the enzymes to be stimulated by the calmodulin-Ca(2+) complex are a number of protein kinases and phosphatases. The sequence is that of Calmodulin (CAM) from Malus domestica (Apple).